We begin with the raw amino-acid sequence, 557 residues long: Potassium-transporting ATPase potassium-binding subunit (557 aa).

The next 12 membrane-spanning stretches (helical) occupy residues 5-25 (GFLL…PLGS), 63-83 (LCAI…MLLG), 132-152 (GLTV…FALI), 170-190 (LLRI…LFFI), 253-273 (FVQM…FGEV), 283-303 (LLWA…WAEV), 329-349 (VLVS…AVIA), 356-376 (ALGG…FGGV), 379-399 (GLYG…LMIG), 416-436 (LTAL…ALAM), 484-504 (LLAF…MAIA), and 526-546 (LFVG…FIPA).

Belongs to the KdpA family. The system is composed of three essential subunits: KdpA, KdpB and KdpC.

The protein resides in the cell inner membrane. In terms of biological role, part of the high-affinity ATP-driven potassium transport (or Kdp) system, which catalyzes the hydrolysis of ATP coupled with the electrogenic transport of potassium into the cytoplasm. This subunit binds the periplasmic potassium ions and delivers the ions to the membrane domain of KdpB through an intramembrane tunnel. The protein is Potassium-transporting ATPase potassium-binding subunit of Escherichia coli (strain K12 / MC4100 / BW2952).